A 384-amino-acid chain; its full sequence is Urea transporter 1 (384 aa).

The tract at residues 1 to 23 is disordered; that stretch reads MDDNPTAVKLDQGGNQAPQGQGR. A run of 5 helical transmembrane segments spans residues 61-81, 85-105, 111-131, 138-158, and 168-188; these read ISQV…VGLL, PWCA…ALLL, AITA…MAIY, FWWL…FSSA, and LPVF…ATGH. The N-linked (GlcNAc...) asparagine glycan is linked to N206. Transmembrane regions (helical) follow at residues 237 to 257, 279 to 299, and 327 to 347; these read GGIF…HAAI, GLWG…FMAL, and VVGL…FLLL.

The protein belongs to the urea transporter family. Homotrimer; each subunit contains a pore through which urea permeates. Identified in a complex with STOM.

It is found in the cell membrane. The protein localises to the basolateral cell membrane. It carries out the reaction urea(in) = urea(out). Mediates the transport of urea driven by a concentration gradient across the cell membranes of erythrocytes and the renal inner medullary collecting duct which is critical to the urinary concentrating mechanism. Facilitates water transport in erythrocytes. This is Urea transporter 1 (SLC14A1) from Capra hircus (Goat).